Reading from the N-terminus, the 118-residue chain is Large ribosomal subunit protein uL18 (118 aa).

The protein belongs to the universal ribosomal protein uL18 family. Part of the 50S ribosomal subunit; part of the 5S rRNA/L5/L18/L25 subcomplex. Contacts the 5S and 23S rRNAs.

This is one of the proteins that bind and probably mediate the attachment of the 5S RNA into the large ribosomal subunit, where it forms part of the central protuberance. In Caulobacter sp. (strain K31), this protein is Large ribosomal subunit protein uL18.